The chain runs to 255 residues: Thiazole synthase (255 aa).

Lys96 functions as the Schiff-base intermediate with DXP in the catalytic mechanism. Residues Gly157, 184-185 (AG), and 206-207 (NT) contribute to the 1-deoxy-D-xylulose 5-phosphate site.

The protein belongs to the ThiG family. As to quaternary structure, homotetramer. Forms heterodimers with either ThiH or ThiS.

It localises to the cytoplasm. It carries out the reaction [ThiS sulfur-carrier protein]-C-terminal-Gly-aminoethanethioate + 2-iminoacetate + 1-deoxy-D-xylulose 5-phosphate = [ThiS sulfur-carrier protein]-C-terminal Gly-Gly + 2-[(2R,5Z)-2-carboxy-4-methylthiazol-5(2H)-ylidene]ethyl phosphate + 2 H2O + H(+). Its pathway is cofactor biosynthesis; thiamine diphosphate biosynthesis. In terms of biological role, catalyzes the rearrangement of 1-deoxy-D-xylulose 5-phosphate (DXP) to produce the thiazole phosphate moiety of thiamine. Sulfur is provided by the thiocarboxylate moiety of the carrier protein ThiS. In vitro, sulfur can be provided by H(2)S. In Clostridium acetobutylicum (strain ATCC 824 / DSM 792 / JCM 1419 / IAM 19013 / LMG 5710 / NBRC 13948 / NRRL B-527 / VKM B-1787 / 2291 / W), this protein is Thiazole synthase.